The chain runs to 357 residues: Adenosine deaminase (357 aa).

Positions 16 and 18 each coordinate Zn(2+). Positions 18, 20, and 185 each coordinate substrate. A Zn(2+)-binding site is contributed by histidine 212. Residue glutamate 215 is the Proton donor of the active site. A Zn(2+)-binding site is contributed by aspartate 294. Aspartate 295 contributes to the substrate binding site.

Belongs to the metallo-dependent hydrolases superfamily. Adenosine and AMP deaminases family. Zn(2+) is required as a cofactor.

Its subcellular location is the cell membrane. The protein localises to the cell junction. It is found in the cytoplasmic vesicle lumen. It localises to the cytoplasm. The protein resides in the lysosome. The catalysed reaction is adenosine + H2O + H(+) = inosine + NH4(+). It carries out the reaction 2'-deoxyadenosine + H2O + H(+) = 2'-deoxyinosine + NH4(+). In terms of biological role, catalyzes the hydrolytic deamination of adenosine and 2-deoxyadenosine. Plays an important role in purine metabolism and in adenosine homeostasis. Modulates signaling by extracellular adenosine, and so contributes indirectly to cellular signaling events. May act as a positive regulator of T-cell coactivation. The polypeptide is Adenosine deaminase (ADA) (Gallus gallus (Chicken)).